Consider the following 144-residue polypeptide: Large ribosomal subunit protein uL15 (144 aa).

The tract at residues 1 to 44 (MNLNELQPAAGSRKLRNRVGRGTSSGNGKTSGRGQKGQKARGKV) is disordered. Residues 23–35 (TSSGNGKTSGRGQ) are compositionally biased toward gly residues.

This sequence belongs to the universal ribosomal protein uL15 family. As to quaternary structure, part of the 50S ribosomal subunit.

Its function is as follows. Binds to the 23S rRNA. The chain is Large ribosomal subunit protein uL15 from Leuconostoc citreum (strain KM20).